The following is a 218-amino-acid chain: GTP cyclohydrolase 1 (218 aa).

Positions 109, 112, and 180 each coordinate Zn(2+).

The protein belongs to the GTP cyclohydrolase I family. Toroid-shaped homodecamer, composed of two pentamers of five dimers.

It carries out the reaction GTP + H2O = 7,8-dihydroneopterin 3'-triphosphate + formate + H(+). The protein operates within cofactor biosynthesis; 7,8-dihydroneopterin triphosphate biosynthesis; 7,8-dihydroneopterin triphosphate from GTP: step 1/1. This is GTP cyclohydrolase 1 (folE) from Pasteurella multocida (strain Pm70).